The sequence spans 507 residues: ATP synthase subunit alpha 2 (507 aa).

Residue 171 to 178 (GDRATGKT) coordinates ATP.

This sequence belongs to the ATPase alpha/beta chains family. As to quaternary structure, F-type ATPases have 2 components, CF(1) - the catalytic core - and CF(0) - the membrane proton channel. CF(1) has five subunits: alpha(3), beta(3), gamma(1), delta(1), epsilon(1). CF(0) has three main subunits: a(1), b(2) and c(9-12). The alpha and beta chains form an alternating ring which encloses part of the gamma chain. CF(1) is attached to CF(0) by a central stalk formed by the gamma and epsilon chains, while a peripheral stalk is formed by the delta and b chains.

It is found in the cell inner membrane. The enzyme catalyses ATP + H2O + 4 H(+)(in) = ADP + phosphate + 5 H(+)(out). In terms of biological role, produces ATP from ADP in the presence of a proton gradient across the membrane. The alpha chain is a regulatory subunit. This chain is ATP synthase subunit alpha 2, found in Gluconobacter oxydans (strain 621H) (Gluconobacter suboxydans).